A 467-amino-acid chain; its full sequence is A-type ATP synthase subunit B (467 aa).

A disordered region spans residues 95 to 114 (GKGQPRDHMPLPPPEDFRDV).

The protein belongs to the ATPase alpha/beta chains family. In terms of assembly, has multiple subunits with at least A(3), B(3), C, D, E, F, H, I and proteolipid K(x).

The protein localises to the cell membrane. Component of the A-type ATP synthase that produces ATP from ADP in the presence of a proton gradient across the membrane. The B chain is a regulatory subunit. This Pyrobaculum islandicum (strain DSM 4184 / JCM 9189 / GEO3) protein is A-type ATP synthase subunit B.